The sequence spans 269 residues: MSAPISQALWDARIPLLITHPLAPTTPFITSIPRFSYLALLLPRLSAFFNTPCSSFHFEDVVLRNLPVGLLVDLYQPSLPWRLIVNDGVSWDISDTFLNAAKEADFIRNGNANQIMKLSKDDTRQLWHAVIDNDLAAFSRINNRLLNAPTALKHVPMRIYLPLAPGGSAGGDVGEPTVDQQQGGGDASAAGAFKIIQSLVQPLGADRRPRLLGQVLRETMPKLFPSSRDPVMANVLLHGVAVPFNAPLADLMREAAYFDGWLSFVVVVL.

Residue K102 forms a Glycyl lysine isopeptide (Lys-Gly) (interchain with G-Cter in ATG12) linkage.

It belongs to the ATG5 family. In terms of assembly, conjugated with ATG12. The ATG5-ATG12 conjugate forms a complex with several units of ATG16. The ATG12-ATG5 conjugate also associates with ATG3. In terms of processing, conjugated to ATG12; which is essential for autophagy. Conjugation with ATG12 involves ATG7 as an E1-like activating enzyme and ATG10 as an E2-like conjugating enzyme.

It localises to the preautophagosomal structure membrane. Its function is as follows. Involved in cytoplasm to vacuole transport (Cvt) and autophagic vesicle formation. Autophagy is essential for maintenance of amino acid levels and protein synthesis under nitrogen starvation. Required for selective autophagic degradation of the nucleus (nucleophagy). Also required for mitophagy, which eliminates defective or superfluous mitochondria in order to fulfill cellular energy requirements and prevent excess ROS production. Conjugation with ATG12, through a ubiquitin-like conjugating system involving ATG7 as an E1-like activating enzyme and ATG10 as an E2-like conjugating enzyme, is essential for its function. The ATG12-ATG5 conjugate acts as an E3-like enzyme which is required for lipidation of ATG8 and ATG8 association to the vesicle membranes. ATG12-ATG5 rearranges the ATG3 catalytic center and enhances its E2 activity. Required for proper vegetative growth, asexual/sexual reproduction, but, unlike several plant and animal pathogenic fungi, where ATG5 is required for infection, in B.bassiana it is dispensable for pathogenesis. The polypeptide is Autophagy-related protein 5 (Beauveria bassiana (strain ARSEF 2860) (White muscardine disease fungus)).